The following is a 78-amino-acid chain: Acyl carrier protein AcpP (78 aa).

One can recognise a Carrier domain in the interval serine 2 to glutamine 77. At serine 37 the chain carries O-(pantetheine 4'-phosphoryl)serine.

The protein belongs to the acyl carrier protein (ACP) family. Post-translationally, 4'-phosphopantetheine is transferred from CoA to a specific serine of apo-ACP by AcpS. This modification is essential for activity because fatty acids are bound in thioester linkage to the sulfhydryl of the prosthetic group.

It localises to the cytoplasm. The protein operates within lipid metabolism; fatty acid biosynthesis. Its function is as follows. Carrier of the growing fatty acid chain in fatty acid biosynthesis. This is Acyl carrier protein AcpP from Agrobacterium fabrum (strain C58 / ATCC 33970) (Agrobacterium tumefaciens (strain C58)).